The primary structure comprises 289 residues: Oxaloacetate decarboxylase (289 aa).

Ser50 contacts substrate. Residue Asp88 participates in Mg(2+) binding. Residues Arg159 and His235 each contribute to the substrate site.

Belongs to the isocitrate lyase/PEP mutase superfamily. Oxaloacetate decarboxylase family. In terms of assembly, homotetramer; dimer of dimers. It depends on Mg(2+) as a cofactor.

It catalyses the reaction oxaloacetate + H(+) = pyruvate + CO2. In terms of biological role, catalyzes the decarboxylation of oxaloacetate into pyruvate. Seems to play a role in maintaining cellular concentrations of bicarbonate and pyruvate. In Pseudomonas putida (strain ATCC 47054 / DSM 6125 / CFBP 8728 / NCIMB 11950 / KT2440), this protein is Oxaloacetate decarboxylase.